A 372-amino-acid polypeptide reads, in one-letter code: N-methyl-L-tryptophan oxidase (372 aa).

FAD is bound at residue 4-34 (DLIIIGSGSVGAAAGYYATRAGLKVLMTDAH). C307 carries the S-8alpha-FAD cysteine modification.

This sequence belongs to the MSOX/MTOX family. MTOX subfamily. In terms of assembly, monomer. Requires FAD as cofactor.

It carries out the reaction N(alpha)-methyl-L-tryptophan + O2 + H2O = L-tryptophan + formaldehyde + H2O2. In terms of biological role, catalyzes the oxidative demethylation of N-methyl-L-tryptophan. In Salmonella arizonae (strain ATCC BAA-731 / CDC346-86 / RSK2980), this protein is N-methyl-L-tryptophan oxidase.